A 168-amino-acid polypeptide reads, in one-letter code: MISDILAPGLRVVFCGINPGKSSAHTGFHFAHPGNRFWKVIHQAGFTDRQLRPEEELQLLDTRCGITMLVERPTVQASEVALQELRSGGRELVRKIEEYQPQALAVLGKQAFELAFNQRGAKWGKQAMTIGTTQVWVLPNPSGLNRATLDKLVAAYRELDDALATRGQ.

Belongs to the uracil-DNA glycosylase (UDG) superfamily. TDG/mug family. In terms of assembly, binds DNA as a monomer.

It localises to the cytoplasm. It catalyses the reaction Specifically hydrolyzes mismatched double-stranded DNA and polynucleotides, releasing free uracil.. Excises ethenocytosine and uracil, which can arise by alkylation or deamination of cytosine, respectively, from the corresponding mispairs with guanine in ds-DNA. It is capable of hydrolyzing the carbon-nitrogen bond between the sugar-phosphate backbone of the DNA and the mispaired base. The complementary strand guanine functions in substrate recognition. Required for DNA damage lesion repair in stationary-phase cells. The sequence is that of G/U mismatch-specific DNA glycosylase from Klebsiella pneumoniae subsp. pneumoniae (strain ATCC 700721 / MGH 78578).